Here is a 341-residue protein sequence, read N- to C-terminus: Casein kinase I isoform alpha (341 aa).

One can recognise a Protein kinase domain in the interval 16–284 (YKLIRKIGSG…YLRQLFRILF (269 aa)). ATP contacts are provided by residues 22-30 (IGSGSFGDI) and K45. The Proton acceptor role is filled by D135. The segment covering 306–320 (QSQSSGVPGTNTTTQ) has biased composition (polar residues). The interval 306 to 341 (QSQSSGVPGTNTTTQGATVPSAGVPAGVAPGGTTPQ) is disordered. The span at 321 to 341 (GATVPSAGVPAGVAPGGTTPQ) shows a compositional bias: low complexity.

Belongs to the protein kinase superfamily. CK1 Ser/Thr protein kinase family. Casein kinase I subfamily.

It catalyses the reaction L-seryl-[protein] + ATP = O-phospho-L-seryl-[protein] + ADP + H(+). It carries out the reaction L-threonyl-[protein] + ATP = O-phospho-L-threonyl-[protein] + ADP + H(+). This chain is Casein kinase I isoform alpha (kin-19), found in Caenorhabditis elegans.